A 494-amino-acid chain; its full sequence is UDP-N-acetylmuramoyl-L-alanyl-D-glutamate--L-lysine ligase (494 aa).

Position 30 (Ser-30) interacts with UDP-N-acetyl-alpha-D-muramoyl-L-alanyl-D-glutamate. An ATP-binding site is contributed by 110–116 (GTNGKTS). Residues 152–153 (TT), Ser-179, and Arg-187 contribute to the UDP-N-acetyl-alpha-D-muramoyl-L-alanyl-D-glutamate site. Residue Lys-219 is modified to N6-carboxylysine. An L-lysine recognition motif motif is present at residues 406 to 409 (DNPA).

The protein belongs to the MurCDEF family. MurE subfamily. In terms of processing, carboxylation is probably crucial for Mg(2+) binding and, consequently, for the gamma-phosphate positioning of ATP.

It localises to the cytoplasm. It carries out the reaction UDP-N-acetyl-alpha-D-muramoyl-L-alanyl-D-glutamate + L-lysine + ATP = UDP-N-acetyl-alpha-D-muramoyl-L-alanyl-gamma-D-glutamyl-L-lysine + ADP + phosphate + H(+). Its pathway is cell wall biogenesis; peptidoglycan biosynthesis. In terms of biological role, catalyzes the addition of L-lysine to the nucleotide precursor UDP-N-acetylmuramoyl-L-alanyl-D-glutamate (UMAG) in the biosynthesis of bacterial cell-wall peptidoglycan. The protein is UDP-N-acetylmuramoyl-L-alanyl-D-glutamate--L-lysine ligase of Staphylococcus haemolyticus (strain JCSC1435).